The chain runs to 285 residues: Sulfotransferase 2A1 (285 aa).

Residues lysine 44, serine 45, glycine 46, threonine 47, asparagine 48, and tryptophan 49 each coordinate 3'-phosphoadenylyl sulfate. Residue histidine 99 is the Proton acceptor of the active site. Residues arginine 121, serine 129, tyrosine 184, serine 218, methionine 223, arginine 247, lysine 248, and glycine 249 each contribute to the 3'-phosphoadenylyl sulfate site. Serine 251 is subject to Phosphoserine.

Belongs to the sulfotransferase 1 family. Homodimer. The N-terminus is blocked. In terms of tissue distribution, liver, adrenal and at lower level in the kidney. Is present in human fetus in higher level in the adrenal than the liver and the kidney.

The protein localises to the cytoplasm. It catalyses the reaction an alcohol + 3'-phosphoadenylyl sulfate = an alkyl sulfate + adenosine 3',5'-bisphosphate + H(+). The enzyme catalyses (24S)-hydroxycholesterol + 3'-phosphoadenylyl sulfate = (24S)-hydroxycholesterol 24-sulfate + adenosine 3',5'-bisphosphate + H(+). The catalysed reaction is (24S)-hydroxycholesterol + 3'-phosphoadenylyl sulfate = (24S)-hydroxycholesterol 3-sulfate + adenosine 3',5'-bisphosphate + H(+). It carries out the reaction (24S)-hydroxycholesterol 24-sulfate + 3'-phosphoadenylyl sulfate = (24S)-hydroxycholesterol 3,24-disulfate + adenosine 3',5'-bisphosphate + H(+). It catalyses the reaction 3beta-hydroxyandrost-5-en-17-one + 3'-phosphoadenylyl sulfate = dehydroepiandrosterone 3-sulfate + adenosine 3',5'-bisphosphate + H(+). The enzyme catalyses pregnenolone + 3'-phosphoadenylyl sulfate = pregnenolone sulfate + adenosine 3',5'-bisphosphate + H(+). The catalysed reaction is androsterone + 3'-phosphoadenylyl sulfate = androsterone 3alpha-sulfate + adenosine 3',5'-bisphosphate + H(+). It carries out the reaction taurolithocholate + 3'-phosphoadenylyl sulfate = taurolithocholate 3-sulfate + adenosine 3',5'-bisphosphate + H(+). It catalyses the reaction lithocholate + 3'-phosphoadenylyl sulfate = lithocholate sulfate + adenosine 3',5'-bisphosphate + H(+). Its activity is regulated as follows. Subject to substrate inhibition. Alternate orientations for binding of steroid substrates to SULT2A1 may play a role in substrate inhibition. Its function is as follows. Sulfotransferase that utilizes 3'-phospho-5'-adenylyl sulfate (PAPS) as sulfonate donor to catalyze the sulfonation of steroids and bile acids in the liver and adrenal glands. Mediates the sulfation of a wide range of steroids and sterols, including pregnenolone, androsterone, DHEA, bile acids, cholesterol and as well many xenobiotics that contain alcohol and phenol functional groups. Sulfonation increases the water solubility of most compounds, and therefore their renal excretion, but it can also result in bioactivation to form active metabolites. Plays an important role in maintening steroid and lipid homeostasis. Plays a key role in bile acid metabolism. In addition, catalyzes the metabolic activation of potent carcinogenic polycyclic arylmethanols. The polypeptide is Sulfotransferase 2A1 (SULT2A1) (Homo sapiens (Human)).